The primary structure comprises 302 residues: Enoyl-CoA delta isomerase 1, mitochondrial (302 aa).

Residues 1–41 constitute a mitochondrion transit peptide; that stretch reads MALVASVRVPARVLLRAGARLPGAALGRTERAAGGGDGARR. Lys61 is modified (N6-acetyllysine; alternate). An N6-succinyllysine; alternate modification is found at Lys61. The residue at position 84 (Lys84) is an N6-succinyllysine. Lys89 carries the post-translational modification N6-acetyllysine. Residues 106 to 110, Gly153, and Asn177 contribute to the substrate site; that span reads AGLDL. Lys283 is subject to N6-acetyllysine; alternate. Lys283 is subject to N6-succinyllysine; alternate. Lys288 carries the N6-succinyllysine modification.

Belongs to the enoyl-CoA hydratase/isomerase family. In terms of assembly, homotrimer. In terms of tissue distribution, expressed in liver (at protein level).

Its subcellular location is the mitochondrion matrix. It carries out the reaction a (3Z)-enoyl-CoA = a 4-saturated (2E)-enoyl-CoA. The catalysed reaction is a (3E)-enoyl-CoA = a 4-saturated (2E)-enoyl-CoA. The enzyme catalyses (3Z)-octenoyl-CoA = (2E)-octenoyl-CoA. It catalyses the reaction (2E)-tetradecenoyl-CoA = (3Z)-tetradecenoyl-CoA. It carries out the reaction (3Z)-dodecenoyl-CoA = (2E)-dodecenoyl-CoA. The catalysed reaction is (3Z)-hexenoyl-CoA = (2E)-hexenoyl-CoA. The enzyme catalyses (3Z)-decenoyl-CoA = (2E)-decenoyl-CoA. The protein operates within lipid metabolism; fatty acid beta-oxidation. Key enzyme of fatty acid beta-oxidation. Able to isomerize both 3-cis (3Z) and 3-trans (3E) double bonds into the 2-trans (2E) form in a range of enoyl-CoA species, with a preference for (3Z)-enoyl-CoAs over (3E)-enoyl-CoAs. The catalytic efficiency of this enzyme is not affected by the fatty acyl chain length. The chain is Enoyl-CoA delta isomerase 1, mitochondrial (ECI1) from Homo sapiens (Human).